We begin with the raw amino-acid sequence, 689 residues long: Glycine--tRNA ligase beta subunit (689 aa).

Belongs to the class-II aminoacyl-tRNA synthetase family. As to quaternary structure, tetramer of two alpha and two beta subunits.

It localises to the cytoplasm. It catalyses the reaction tRNA(Gly) + glycine + ATP = glycyl-tRNA(Gly) + AMP + diphosphate. The polypeptide is Glycine--tRNA ligase beta subunit (Shigella boydii serotype 18 (strain CDC 3083-94 / BS512)).